The primary structure comprises 74 residues: Putative protein YozX (74 aa).

The polypeptide is Putative protein YozX (yozX) (Bacillus subtilis (strain 168)).